Here is a 223-residue protein sequence, read N- to C-terminus: Endonuclease V (223 aa).

Mg(2+) is bound by residues aspartate 35 and aspartate 103.

Belongs to the endonuclease V family. Mg(2+) is required as a cofactor.

It is found in the cytoplasm. The catalysed reaction is Endonucleolytic cleavage at apurinic or apyrimidinic sites to products with a 5'-phosphate.. Functionally, DNA repair enzyme involved in the repair of deaminated bases. Selectively cleaves double-stranded DNA at the second phosphodiester bond 3' to a deoxyinosine leaving behind the intact lesion on the nicked DNA. This Salmonella enteritidis PT4 (strain P125109) protein is Endonuclease V.